The primary structure comprises 103 residues: Small integral membrane protein 32 (103 aa).

The chain crosses the membrane as a helical span at residues 55–75 (YLLLFFLLLLSVALVVLFIGC).

It localises to the membrane. This chain is Small integral membrane protein 32, found in Homo sapiens (Human).